We begin with the raw amino-acid sequence, 375 residues long: 2-methylcitrate synthase (375 aa).

Lys-72 and His-187 together coordinate substrate. His-222 is an active-site residue. Residue 255 to 259 (KIMGF) coordinates CoA. The active site involves His-261. Arg-270 is a binding site for substrate. Residue Asp-312 is part of the active site. Arg-337 and Arg-356 together coordinate substrate.

Belongs to the citrate synthase family. Homodimer.

It carries out the reaction propanoyl-CoA + oxaloacetate + H2O = (2S,3S)-2-methylcitrate + CoA + H(+). The enzyme catalyses oxaloacetate + acetyl-CoA + H2O = citrate + CoA + H(+). It participates in organic acid metabolism; propanoate degradation. It functions in the pathway carbohydrate metabolism; tricarboxylic acid cycle; isocitrate from oxaloacetate: step 1/2. Functionally, involved in the catabolism of short chain fatty acids (SCFA) via the tricarboxylic acid (TCA)(acetyl degradation route) and via the 2-methylcitrate cycle II (propionate degradation route). Catalyzes the Claisen condensation of propionyl-CoA and oxaloacetate (OAA) to yield 2-methylcitrate (2-MC) and CoA. Catalyzes the condensation of oxaloacetate with acetyl-CoA. The polypeptide is 2-methylcitrate synthase (prpC) (Shewanella oneidensis (strain ATCC 700550 / JCM 31522 / CIP 106686 / LMG 19005 / NCIMB 14063 / MR-1)).